We begin with the raw amino-acid sequence, 108 residues long: UPF0145 protein LJ_1287 (108 aa).

This sequence belongs to the UPF0145 family.

The chain is UPF0145 protein LJ_1287 from Lactobacillus johnsonii (strain CNCM I-12250 / La1 / NCC 533).